Reading from the N-terminus, the 425-residue chain is 2-oxoglutarate and iron-dependent oxygenase JMJD4 homolog (425 aa).

One can recognise a JmjC domain in the interval 165 to 316 (AAQMPGYNFY…MVWQNLKNNL (152 aa)). Positions 212, 214, and 284 each coordinate Fe cation.

It belongs to the JMJD6 family. Fe(2+) is required as a cofactor.

Its subcellular location is the nucleus. It localises to the cytoplasm. It carries out the reaction L-lysyl-[protein] + 2-oxoglutarate + O2 = 4-hydroxy-L-lysyl-[protein] + succinate + CO2. Functionally, catalyzes the 2-oxoglutarate and iron-dependent C4-lysyl hydroxylation of eRF1 thereby promoting the translational termination efficiency of eRF1. May be involved in regulation of chromatin structure, promoting expansion of heterochromatin. The sequence is that of 2-oxoglutarate and iron-dependent oxygenase JMJD4 homolog from Drosophila melanogaster (Fruit fly).